Reading from the N-terminus, the 174-residue chain is Large ribosomal subunit protein uL10 (174 aa).

It belongs to the universal ribosomal protein uL10 family. Part of the ribosomal stalk of the 50S ribosomal subunit. The N-terminus interacts with L11 and the large rRNA to form the base of the stalk. The C-terminus forms an elongated spine to which L12 dimers bind in a sequential fashion forming a multimeric L10(L12)X complex.

Functionally, forms part of the ribosomal stalk, playing a central role in the interaction of the ribosome with GTP-bound translation factors. This is Large ribosomal subunit protein uL10 from Rubrobacter xylanophilus (strain DSM 9941 / JCM 11954 / NBRC 16129 / PRD-1).